Reading from the N-terminus, the 279-residue chain is NH(3)-dependent NAD(+) synthetase (279 aa).

Residue 46–53 (GVSGGQDS) participates in ATP binding. D52 is a Mg(2+) binding site. Residue R139 coordinates deamido-NAD(+). T159 contacts ATP. Residue E164 coordinates Mg(2+). K172 and D179 together coordinate deamido-NAD(+). The ATP site is built by K188 and T210. A deamido-NAD(+)-binding site is contributed by 259-260 (HK).

Belongs to the NAD synthetase family. In terms of assembly, homodimer.

It catalyses the reaction deamido-NAD(+) + NH4(+) + ATP = AMP + diphosphate + NAD(+) + H(+). It participates in cofactor biosynthesis; NAD(+) biosynthesis; NAD(+) from deamido-NAD(+) (ammonia route): step 1/1. Catalyzes the ATP-dependent amidation of deamido-NAD to form NAD. Uses ammonia as a nitrogen source. This is NH(3)-dependent NAD(+) synthetase from Leifsonia xyli subsp. xyli (strain CTCB07).